A 1253-amino-acid polypeptide reads, in one-letter code: MNYIPTQTFYGRRWRPRPAYRPWRVPMQPAPPMVIPELQTPIVQAQQMQQLISAVSALTTKQNGKAPKKPKKKPQKAKAKKNEQQKKNENKKPPPKQKNPAKKKKPGKRERMCMKIENDCIFEVKLDGKVTGYACLVGDKVMKPAHVKGVIDNPDLAKLTYKKSSKYDLECAQIPVHMKSDASKYTHEKPEGHYNWHHGAVQYSGGRFTIPTGAGKPGDSGRPIFDNKGRVVAIVLGGANEGARTALSVVTWTKDMVTRYTPEGTEEWSAALMMCVLANVTFPCSEPACAPCCYEKQPEQTLRMLEDNVDRPGYYDLLEATMTCNNSARHRRSVTKHFNVYKATKPYLAYCADCGDGQFCYSPVAIEKIRDEASDGMIKIQVAAQIGINKGGTHEHNKIRYIAGHDMKEANRDSLQVHTSGVCAIRGTMGHFIVAYCPPGDELKVQFQDAESHTQACKVQYKHAPAPVGREKFTVRPHFGIEVPCTTYQLTTAPTEEEIDMHTPPDIPDITLLSQQSGNVKITAGGKTIRYNCTCGSGNVGTTSSDKTINSCKIAQCHAAVTNHDKWQYTSSFVPRADQLSRKGKVHVPFPLTNSTCRVPVARAPGVTYGKRELTVKLHPDHPTLLTYRSLGADPRPYEEWIDRYVERTIPVTEDGIEYRWGNNPPVRLWAQLTTEGKPHGWPHEIILYYYGLYPAATIAAVSAAGLAVVLSLLASCYMFATARRKCLTPYALTPGAVVPVTLGVLCCAPRAHAASFAESMAYLWDENQTLFWLELATPLAAIIILVCCLKNLLCCCKPLSFLVLVSLGTPVVKSYEHTATIPNVVGFPYKAHIERNGFSPMTLQLEVLGTSLEPTLNLEYITCEYKTVVPSPYIKCCGTSECRSMERPDYQCQVYTGVYPFMWGGAYCFCDTENTQLSEAYVDRSDVCKHDHAAAYKAHTAAMKATIRISYGNLNQTTTAFVNGEHTVTVGGSRFTFGPISTAWTPFDNKIVVYKNDVYNQDFPPYGSGQPGRFGDIQSRTVESKDLYANTALKLSRPSSGTVHVPYTQTPSGFKYWIKERGTSLNDKAPFGCVIKTNPVRAENCAVGNIPVSMDIPDTAFTRVIDAPAVTNLECQVAVCTHSSDFGGIATLTFKTDKPGKCAVHSHSNVATIQEAAVDIKTDGKITLHFSTASASPAFKVSVCSAKTTCMAACEPPKDHIVPYGASHNNQVFPDMSGTAMTWVQRVAGGLGGLTLAAVAVLILVTCVTMRR.

The interval 43–77 (VQAQQMQQLISAVSALTTKQNGKAPKKPKKKPQKA) is host transcription inhibition. The segment at 58–110 (LTTKQNGKAPKKPKKKPQKAKAKKNEQQKKNENKKPPPKQKNPAKKKKPGKRE) is disordered. Positions 66–79 (APKKPKKKPQKAKA) are enriched in basic residues. A Nuclear localization signal motif is present at residues 70-106 (PKKKPQKAKAKKNEQQKKNENKKPPPKQKNPAKKKKP). The segment covering 80-92 (KKNEQQKKNENKK) has biased composition (basic and acidic residues). Residues 90-121 (NKKPPPKQKNPAKKKKPGKRERMCMKIENDCI) form a binding to the viral RNA region. Positions 93–108 (PPPKQKNPAKKKKPGK) are enriched in basic residues. A ribosome-binding region spans residues 106-120 (PGKRERMCMKIENDC). Residues Cys-120 and Cys-135 are joined by a disulfide bond. The Peptidase S3 domain maps to 120–268 (CIFEVKLDGK…RYTPEGTEEW (149 aa)). His-146 (charge relay system) is an active-site residue. The short motif at 151–161 (IDNPDLAKLTY) is the Nuclear export signal element. The interval 162-167 (KKSSKY) is interaction with spike glycoprotein E2. Residue Asp-168 is the Charge relay system of the active site. The interval 190 to 200 (PEGHYNWHHGA) is dimerization of the capsid protein. Residue Ser-220 is the Charge relay system of the active site. The tract at residues 226–230 (DNKGR) is dimerization of the capsid protein. A functions as an uncleaved signal peptide for the precursor of protein E3/E2 region spans residues 269–280 (SAALMMCVLANV). 3 disulfide bridges follow: Cys-275/Cys-284, Cys-289/Cys-293, and Cys-292/Cys-324. The N-linked (GlcNAc...) asparagine; by host glycan is linked to Asn-279. Asn-325 is a glycosylation site (N-linked (GlcNAc...) asparagine; by host). The Extracellular portion of the chain corresponds to 333-694 (SVTKHFNVYK…EIILYYYGLY (362 aa)). Cystine bridges form between Cys-351-Cys-457, Cys-354-Cys-360, Cys-423-Cys-437, Cys-485-Cys-597, Cys-533-Cys-557, and Cys-535-Cys-552. Interaction with host Mxra8 receptor stretches follow at residues 358 to 361 (QFCY) and 394 to 396 (HEH). The tract at residues 516–519 (QSGN) is interaction with host Mxra8 receptor. N-linked (GlcNAc...) asparagine; by host glycosylation occurs at Asn-532. Residues 548–554 (TINSCKI) are interaction with host Mxra8 receptor. Asn-594 carries N-linked (GlcNAc...) asparagine; by host glycosylation. Residues 695–715 (PAATIAAVSAAGLAVVLSLLA) traverse the membrane as a helical segment. Residues 716 to 754 (SCYMFATARRKCLTPYALTPGAVVPVTLGVLCCAPRAHA) are Cytoplasmic-facing. Cys-717 is lipidated: S-stearoyl cysteine; by host. The interaction with the capsid protein stretch occupies residues 722–726 (TARRK). Cys-727 carries S-stearoyl cysteine; by host lipidation. Residues 727 to 747 (CLTPYALTPGAVVPVTLGVLC) form a transient transmembrane before p62-6K protein processing region. A disulfide bridge connects residues Cys-727 and Cys-748. 2 S-palmitoyl cysteine; by host lipidation sites follow: Cys-747 and Cys-748. The Extracellular segment spans residues 755 to 769 (ASFAESMAYLWDENQ). Asn-768 is a glycosylation site (N-linked (GlcNAc...) asparagine; by host). The chain crosses the membrane as a helical span at residues 770-790 (TLFWLELATPLAAIIILVCCL). Over 791–792 (KN) the chain is Cytoplasmic. Residues 793 to 813 (LLCCCKPLSFLVLVSLGTPVV) form a helical membrane-spanning segment. 2 consecutive stretches face the extracellular side: residues 814 to 815 (KS) and 826 to 1227 (VGFP…WVQR). 4 cysteine pairs are disulfide-bonded: Cys-864/Cys-929, Cys-877/Cys-909, Cys-878/Cys-911, and Cys-883/Cys-893. The segment at 899-916 (VYPFMWGGAYCFCDTENT) is E1 fusion peptide loop. N-linked (GlcNAc...) asparagine; by host glycans are attached at residues Asn-956 and Asn-1085. 4 disulfide bridges follow: Cys-1074-Cys-1086, Cys-1116-Cys-1191, Cys-1121-Cys-1195, and Cys-1143-Cys-1185. A helical membrane pass occupies residues 1228–1248 (VAGGLGGLTLAAVAVLILVTC). Residue Cys-1248 is the site of S-palmitoyl cysteine; by host attachment. Over 1249–1253 (VTMRR) the chain is Cytoplasmic.

Homodimer. Homomultimer. Interacts with host karyopherin KPNA4; this interaction allows the nuclear import of the viral capsid protein. Interacts with spike glycoprotein E2. Interacts with host IRAK1; the interaction leads to inhibition of IRAK1-dependent signaling. In terms of assembly, the precursor of protein E3/E2 and E1 form a heterodimer shortly after synthesis. As to quaternary structure, interacts with spike glycoprotein E2. The precursor of protein E3/E2 and E1 form a heterodimer shortly after synthesis. Processing of the precursor of protein E3/E2 into E2 and E3 results in a heterodimer of the spike glycoproteins E2 and E1. Spike at virion surface are constituted of a trimer of E2-E1 heterodimers. After target cell attachment and endocytosis, E1 change conformation to form homotrimers. Interacts with 6K protein. E1/E2 heterodimer interacts with host LDLR. Interacts with spike glycoprotein E1. Processing of the precursor of protein E3/E2 into E2 and E3 results in a heterodimer of the spike glycoproteins E2 and E1. Spike at virion surface are constituted of a trimer of E2-E1 heterodimers. Interacts with 6K protein. Interacts with host MXRA8; this interaction mediates virus entry. In terms of assembly, oligomer. Interacts with spike glycoprotein E1. Interacts with spike glycoprotein E2. In terms of processing, structural polyprotein: Specific enzymatic cleavages in vivo yield mature proteins. Capsid protein is auto-cleaved during polyprotein translation, unmasking a signal peptide at the N-terminus of the precursor of E3/E2. The remaining polyprotein is then targeted to the host endoplasmic reticulum, where host signal peptidase cleaves it into pE2, 6K and E1 proteins. pE2 is further processed to mature E3 and E2 by host furin in trans-Golgi vesicle. Palmitoylated via thioester bonds. These palmitoylations may induce disruption of the C-terminus transmembrane. This would result in the reorientation of E2 C-terminus from lumenal to cytoplasmic side. Post-translationally, N-glycosylated. In terms of processing, palmitoylated via thioester bonds.

The protein localises to the virion. It localises to the host cytoplasm. Its subcellular location is the host cell membrane. The protein resides in the host nucleus. It is found in the virion membrane. The protein localises to the host Golgi apparatus. It localises to the host trans-Golgi network. Its subcellular location is the host endoplasmic reticulum. It catalyses the reaction Autocatalytic release of the core protein from the N-terminus of the togavirus structural polyprotein by hydrolysis of a -Trp-|-Ser- bond.. Functionally, forms an icosahedral capsid with a T=4 symmetry composed of 240 copies of the capsid protein surrounded by a lipid membrane through which penetrate 80 spikes composed of trimers of E1-E2 heterodimers. The capsid protein binds to the viral RNA genome at a site adjacent to a ribosome binding site for viral genome translation following genome release. Possesses a protease activity that results in its autocatalytic cleavage from the nascent structural protein. Following its self-cleavage, the capsid protein transiently associates with ribosomes, and within several minutes the protein binds to viral RNA and rapidly assembles into icosahedric core particles. The resulting nucleocapsid eventually associates with the cytoplasmic domain of the spike glycoprotein E2 at the cell membrane, leading to budding and formation of mature virions. In case of infection, new virions attach to target cells and after clathrin-mediated endocytosis their membrane fuses with the host endosomal membrane. This leads to the release of the nucleocapsid into the cytoplasm, followed by an uncoating event necessary for the genomic RNA to become accessible. The uncoating might be triggered by the interaction of capsid proteins with ribosomes. Binding of ribosomes would release the genomic RNA since the same region is genomic RNA-binding and ribosome-binding. Specifically inhibits interleukin-1 receptor-associated kinase 1/IRAK1-dependent signaling during viral entry, representing a means by which the alphaviruses may evade innate immune detection and activation prior to viral gene expression. Provides the signal sequence for the translocation of the precursor of protein E3/E2 to the host endoplasmic reticulum. Furin-cleaved E3 remains associated with spike glycoprotein E1 and mediates pH protection of the latter during the transport via the secretory pathway. After virion release from the host cell, the assembly protein E3 is gradually released in the extracellular space. In terms of biological role, plays a role in viral attachment to target host cell, by binding to the cell receptor MXRA8. The host LDLR may also act as a cell receptor for viral entry. Synthesized as a p62 precursor which is processed by furin at the cell membrane just before virion budding, giving rise to E2-E1 heterodimer. The p62-E1 heterodimer is stable, whereas E2-E1 is unstable and dissociate at low pH. p62 is processed at the last step, presumably to avoid E1 fusion activation before its final export to cell surface. E2 C-terminus contains a transitory transmembrane that would be disrupted by palmitoylation, resulting in reorientation of the C-terminal tail from lumenal to cytoplasmic side. This step is critical since E2 C-terminus is involved in budding by interacting with capsid proteins. This release of E2 C-terminus in cytoplasm occurs lately in protein export, and precludes premature assembly of particles at the endoplasmic reticulum membrane. Its function is as follows. Acts as a viroporin that participates in virus glycoprotein processing and transport to the plasma membrane, cell permeabilization and budding of viral particles. Disrupts the calcium homeostasis of the cell, probably at the endoplasmic reticulum level. This leads to cytoplasmic calcium elevation. Because of its lipophilic properties, the 6K protein is postulated to influence the selection of lipids that interact with the transmembrane domains of the glycoproteins, which, in turn, affects the deformability of the bilayer required for the extreme curvature that occurs as budding proceeds. Present in low amount in virions, about 3% compared to viral glycoproteins. Functionally, class II viral fusion protein. Fusion activity is inactive as long as E1 is bound to E2 in mature virion. After virus attachment to target cell via host MXRA8 and endocytosis, acidification of the endosome induce dissociation of E1/E2 heterodimer and concomitant trimerization of the E1 subunits. This E1 trimer is fusion active, and promotes release of viral nucleocapsid in cytoplasm after endosome and viral membrane fusion. Efficient fusion requires the presence of cholesterol and sphingolipid in the target membrane. The polypeptide is Structural polyprotein (Aedes vexans (Inland floodwater mosquito)).